The sequence spans 442 residues: MVVSRDKAPSAQETFLQMAQAAGLRGRLLITIGLLILVRVGIFIPVPDIDRQAFSQAINDNSVIGFLNIFTGGGLSTVGIFALGILPYINASIIMQLLTAAIPALEDLQKNEGEAGRRKISQYSRYIAFGWCIIQGLGLTVGLLRPYANNYGPLFIFQTVLAITAGSMFVMWISELITERGIGNGASLLIFVNIVATLPQTLGQTIEYAQSGGRQSITAVVLLMLVFLVMIVGIVFVQEGTRRIPIISARRQVGKKLYRERTSYLPLRLNQGGVMPIIFASAVLILPSSLAGFATGNEGLGGFGEIFVQISNALRPGTWVYTVVYSVMIFFFSYFYASLIVNPEDVSKNLKKMGSSIPGIRPGKKTEQYLEGVLNRLTFLGAIFLSFVATLPIFVEQATGVTTFQGLGATSLLILVGVAIDTAKQIQTYVISQRYEGMIKQP.

10 helical membrane passes run 29–49 (LITI…VPDI), 69–89 (IFTG…LPYI), 126–146 (YIAF…LLRP), 153–173 (PLFI…VMWI), 182–202 (IGNG…PQTL), 217–237 (ITAV…IVFV), 274–294 (VMPI…AGFA), 320–340 (VYTV…ASLI), 377–397 (LTFL…FVEQ), and 400–420 (GVTT…GVAI).

Belongs to the SecY/SEC61-alpha family. As to quaternary structure, component of the Sec protein translocase complex. Heterotrimer consisting of SecY, SecE and SecG subunits. The heterotrimers can form oligomers, although 1 heterotrimer is thought to be able to translocate proteins. Interacts with the ribosome. Interacts with SecDF, and other proteins may be involved. Interacts with SecA.

Its subcellular location is the cell inner membrane. The protein resides in the cellular thylakoid membrane. Functionally, the central subunit of the protein translocation channel SecYEG. Consists of two halves formed by TMs 1-5 and 6-10. These two domains form a lateral gate at the front which open onto the bilayer between TMs 2 and 7, and are clamped together by SecE at the back. The channel is closed by both a pore ring composed of hydrophobic SecY resides and a short helix (helix 2A) on the extracellular side of the membrane which forms a plug. The plug probably moves laterally to allow the channel to open. The ring and the pore may move independently. In Synechocystis sp. (strain ATCC 27184 / PCC 6803 / Kazusa), this protein is Protein translocase subunit SecY.